Here is a 327-residue protein sequence, read N- to C-terminus: Spermidine/putrescine import ATP-binding protein PotA (327 aa).

One can recognise an ABC transporter domain in the interval 5–235; it reads IKVEAVEKHF…PKTLFVATFI (231 aa). 37-44 contacts ATP; that stretch reads GPSGCGKT.

This sequence belongs to the ABC transporter superfamily. Spermidine/putrescine importer (TC 3.A.1.11.1) family. The complex is composed of two ATP-binding proteins (PotA), two transmembrane proteins (PotB and PotC) and a solute-binding protein (PotD).

It localises to the cell membrane. The catalysed reaction is ATP + H2O + polyamine-[polyamine-binding protein]Side 1 = ADP + phosphate + polyamineSide 2 + [polyamine-binding protein]Side 1.. Part of the ABC transporter complex PotABCD involved in spermidine/putrescine import. Responsible for energy coupling to the transport system. The protein is Spermidine/putrescine import ATP-binding protein PotA of Bacillus thuringiensis subsp. konkukian (strain 97-27).